A 448-amino-acid polypeptide reads, in one-letter code: Phosphoglucosamine mutase (448 aa).

S100 serves as the catalytic Phosphoserine intermediate. Mg(2+)-binding residues include S100, D240, D242, and D244. S100 bears the Phosphoserine mark.

This sequence belongs to the phosphohexose mutase family. Mg(2+) is required as a cofactor. Post-translationally, activated by phosphorylation.

The enzyme catalyses alpha-D-glucosamine 1-phosphate = D-glucosamine 6-phosphate. In terms of biological role, catalyzes the conversion of glucosamine-6-phosphate to glucosamine-1-phosphate. In Clostridium beijerinckii (strain ATCC 51743 / NCIMB 8052) (Clostridium acetobutylicum), this protein is Phosphoglucosamine mutase.